Consider the following 306-residue polypeptide: Protoheme IX farnesyltransferase (306 aa).

The next 9 helical transmembrane spans lie at 35–55, 61–81, 106–126, 129–149, 157–177, 183–203, 224–244, 245–265, and 286–306; these read LIVFCALIGMVLAVPGVPTWL, LIACAGIWLVAGAAAAFNCLV, LTLAFSAGLCALGSWVLYVWV, LTMWLTFATFVGYAVVYTVIL, IVIGGASGAMPPVLGWAAMTG, ALILFLIIFLWTPPHFWALAL, EFTRLQVFLYTLVLFPACLMP, FIFKMSGWLYLVAAVLLSIGF, and RFSLIHLSALFAALLLDHYLI.

Belongs to the UbiA prenyltransferase family. Protoheme IX farnesyltransferase subfamily.

The protein resides in the cell inner membrane. The catalysed reaction is heme b + (2E,6E)-farnesyl diphosphate + H2O = Fe(II)-heme o + diphosphate. The protein operates within porphyrin-containing compound metabolism; heme O biosynthesis; heme O from protoheme: step 1/1. In terms of biological role, converts heme B (protoheme IX) to heme O by substitution of the vinyl group on carbon 2 of heme B porphyrin ring with a hydroxyethyl farnesyl side group. This Polaromonas naphthalenivorans (strain CJ2) protein is Protoheme IX farnesyltransferase.